The chain runs to 120 residues: Flagellar protein FliT (120 aa).

Residues 1 to 50 are required for homodimerization; the sequence is MERHQHLLSEYQQILTLSEQMLVLATEGNWDALVDLEMTYLKAVESTANI. The segment at 60–98 is fliD binding; sequence LQDLLREKLRAILDNEIEIKRLLQLRLDRLSDLVGQSTK.

Belongs to the FliT family. As to quaternary structure, homodimer. Interacts with FliD and FlhC.

It is found in the cytoplasm. The protein localises to the cytosol. In terms of biological role, dual-function protein that regulates the transcription of class 2 flagellar operons and that also acts as an export chaperone for the filament-capping protein FliD. As a transcriptional regulator, acts as an anti-FlhDC factor; it directly binds FlhC, thus inhibiting the binding of the FlhC/FlhD complex to class 2 promoters, resulting in decreased expression of class 2 flagellar operons. As a chaperone, effects FliD transition to the membrane by preventing its premature polymerization, and by directing it to the export apparatus. In Yersinia enterocolitica serotype O:8 / biotype 1B (strain NCTC 13174 / 8081), this protein is Flagellar protein FliT.